A 512-amino-acid chain; its full sequence is Monocarboxylate transporter 14 (512 aa).

Over 1 to 29 (MYTSHEDIGYDLEDDRKAKNKKTLKPHPD) the chain is Cytoplasmic. 12 helical membrane passes run 30–50 (IDGG…ILIM), 76–96 (WVSS…GLFI), 105–125 (AIIG…AANV), 129–149 (FITF…PAVV), 161–181 (LAQG…TVLL), 193–211 (AMFI…GALM), 317–337 (MFVA…IPFI), 355–375 (FPLT…LGAV), 381–401 (ISVW…IFLL), 410–430 (LAVI…MPVV), 446–466 (IIIC…GWIF), and 476–496 (FYIC…QPCI). At 497 to 512 (QMIDQSRRKCIEGAHV) the chain is on the cytoplasmic side.

This sequence belongs to the major facilitator superfamily. Monocarboxylate porter (TC 2.A.1.13) family.

It localises to the cell membrane. Functionally, proton-linked monocarboxylate transporter. May catalyze the transport of monocarboxylates across the plasma membrane. This is Monocarboxylate transporter 14 (Slc16a14) from Mus musculus (Mouse).